Reading from the N-terminus, the 259-residue chain is tRNA (guanine-N(1)-)-methyltransferase (259 aa).

S-adenosyl-L-methionine contacts are provided by residues glycine 113 and 133–138 (IGDYVL).

It belongs to the RNA methyltransferase TrmD family. As to quaternary structure, homodimer.

Its subcellular location is the cytoplasm. It catalyses the reaction guanosine(37) in tRNA + S-adenosyl-L-methionine = N(1)-methylguanosine(37) in tRNA + S-adenosyl-L-homocysteine + H(+). Functionally, specifically methylates guanosine-37 in various tRNAs. This is tRNA (guanine-N(1)-)-methyltransferase from Xanthomonas oryzae pv. oryzae (strain MAFF 311018).